The sequence spans 574 residues: R-linalool synthase, chloroplastic (574 aa).

The transit peptide at 1–40 directs the protein to the chloroplast; that stretch reads MSCARITVTLPYRSAKTSIQRGITHCPALLRPRFSACTPL. Polar residues predominate over residues 52-61; that stretch reads INGDNSPLKN. A disordered region spans residues 52-71; the sequence is INGDNSPLKNTHQHVEERSS. Positions 287, 324, 328, 467, and 470 each coordinate (2E)-geranyl diphosphate. Residues Asp-324 and Asp-328 each contribute to the Mg(2+) site. The DDXXD motif motif lies at 324–328; sequence DDIFD. Mg(2+) contacts are provided by Asp-470, Thr-474, and Glu-478.

It belongs to the terpene synthase family. Tpsb subfamily. Requires Mg(2+) as cofactor. The cofactor is Mn(2+).

Its subcellular location is the plastid. It localises to the chloroplast. It catalyses the reaction (2E)-geranyl diphosphate + H2O = (R)-linalool + diphosphate. It functions in the pathway secondary metabolite biosynthesis; terpenoid biosynthesis. In terms of biological role, monoterpene synthase that catalyzes the formation of (3R)-linalool from geranyl diphosphate. This is R-linalool synthase, chloroplastic (LIS) from Ocimum basilicum (Sweet basil).